Consider the following 383-residue polypeptide: Probable lipid transporter atnI (383 aa).

The next 2 membrane-spanning stretches (helical) occupy residues 46-66 (VLFS…AIMF) and 71-91 (AWVV…RSLF). Residue asparagine 94 is glycosylated (N-linked (GlcNAc...) asparagine). 5 helical membrane passes run 104-124 (FTIF…MTLG), 144-164 (FGHI…VGAA), 182-202 (IYMG…GLFI), 231-251 (WLFY…IFRL), and 269-289 (WFEY…LNVA). The segment at 305–383 (VSRKEKKQRK…YDNRGNEVRP (79 aa)) is disordered. Residues 307 to 316 (RKEKKQRKRE) are compositionally biased toward basic residues. Over residues 317–329 (KKEAKIAEKEAKK) the composition is skewed to basic and acidic residues.

The protein belongs to the lipid-translocating exporter (LTE) (TC 9.A.26.1) family.

It is found in the membrane. The protein operates within secondary metabolite biosynthesis. Probable lipid transporter; part of the gene cluster that mediates the biosynthesis of aspercryptins, linear lipopeptides built from six amino acids including 2 highly unusual and nonproteogenic amino acids, 2-amino-octanoic acid (2aoa) and 2-amino-dodecanol (2adol). The core structure of aspercryptins is as follows: Ser/Ala-Thr-Ile/Val-2aoa-Asn-2adol. The first step of aspercryptin biosynthesis is the generation of the fatty acid precursors, octanoic and dodecanoic acids, by the FAS subunits atnF and atnM. The fatty acid precursors are likely transformed into the corresponding alpha-amino fatty acids in three steps. First, they are hydroxylated by the cytochrome P450 monooxygenase atnE, then oxidized to the corresponding alpha-keto acids by the NAD(P)-dependent oxidoreductase atnD, and finally converted to the alpha-amino fatty acids by the PLP-dependent aminotransferases atnH or atnJ. the alpha-amino fatty acids, 2-amino-octanoic and 2-amino-dodecanoic acids, are recognized, activated, and covalently tethered to the NRPS atnA by its fourth and sixth adenylation domains. The second module of atnA is the Thr module and contains an epimerase (E) domain responsible for the epimerization of Thr to D-allo-Thr. Additionally, despite atnA having only one epimerase domain, the first amino acid of aspercryptin A1 is D-Ser, suggesting that serine is either loaded directly as D-Ser on the first module or that the epimerase domain in the threonine module epimerizes both L-Ser and L-Thr. After condensation of the hexapeptide of aspercryptin, the C-terminal reductase (TE) domain might be involved in the reductive release and production of the aldehyde hexapeptide. Further reduction would generate aspercryptins. The variety of aspercryptins produced reflects the flexibility of the atnA NRPS, allowing incorporation of alanine instead of serine, valine for isoleucine, and a C10 fatty amino alcohol instead of the C12 version. AtnB seems to be involved in the selectivity for Ile versus Val by the third module. Moreover, type B, C and D aspercryptins have an additional N-terminal cichorine, acetyl and propionyl group respectively. The chain is Probable lipid transporter atnI from Emericella nidulans (strain FGSC A4 / ATCC 38163 / CBS 112.46 / NRRL 194 / M139) (Aspergillus nidulans).